Here is a 213-residue protein sequence, read N- to C-terminus: Thiamine-phosphate synthase (213 aa).

4-amino-2-methyl-5-(diphosphooxymethyl)pyrimidine is bound by residues 41–45 and N73; that span reads QFRVK. 2 residues coordinate Mg(2+): D74 and D93. T112 lines the 4-amino-2-methyl-5-(diphosphooxymethyl)pyrimidine pocket. 139-141 is a 2-[(2R,5Z)-2-carboxy-4-methylthiazol-5(2H)-ylidene]ethyl phosphate binding site; the sequence is SAT. 4-amino-2-methyl-5-(diphosphooxymethyl)pyrimidine is bound at residue K142. A 2-[(2R,5Z)-2-carboxy-4-methylthiazol-5(2H)-ylidene]ethyl phosphate-binding site is contributed by G171.

Belongs to the thiamine-phosphate synthase family. Mg(2+) serves as cofactor.

It carries out the reaction 2-[(2R,5Z)-2-carboxy-4-methylthiazol-5(2H)-ylidene]ethyl phosphate + 4-amino-2-methyl-5-(diphosphooxymethyl)pyrimidine + 2 H(+) = thiamine phosphate + CO2 + diphosphate. The enzyme catalyses 2-(2-carboxy-4-methylthiazol-5-yl)ethyl phosphate + 4-amino-2-methyl-5-(diphosphooxymethyl)pyrimidine + 2 H(+) = thiamine phosphate + CO2 + diphosphate. The catalysed reaction is 4-methyl-5-(2-phosphooxyethyl)-thiazole + 4-amino-2-methyl-5-(diphosphooxymethyl)pyrimidine + H(+) = thiamine phosphate + diphosphate. Its pathway is cofactor biosynthesis; thiamine diphosphate biosynthesis; thiamine phosphate from 4-amino-2-methyl-5-diphosphomethylpyrimidine and 4-methyl-5-(2-phosphoethyl)-thiazole: step 1/1. Functionally, condenses 4-methyl-5-(beta-hydroxyethyl)thiazole monophosphate (THZ-P) and 2-methyl-4-amino-5-hydroxymethyl pyrimidine pyrophosphate (HMP-PP) to form thiamine monophosphate (TMP). This is Thiamine-phosphate synthase from Erythrobacter litoralis (strain HTCC2594).